The chain runs to 251 residues: Triosephosphate isomerase (251 aa).

Residue 9-11 (NWK) participates in substrate binding. Residue H95 is the Electrophile of the active site. E167 serves as the catalytic Proton acceptor. Substrate-binding positions include G173, S213, and 234–235 (GG).

This sequence belongs to the triosephosphate isomerase family. Homodimer.

It is found in the cytoplasm. The catalysed reaction is D-glyceraldehyde 3-phosphate = dihydroxyacetone phosphate. It functions in the pathway carbohydrate biosynthesis; gluconeogenesis. It participates in carbohydrate degradation; glycolysis; D-glyceraldehyde 3-phosphate from glycerone phosphate: step 1/1. Involved in the gluconeogenesis. Catalyzes stereospecifically the conversion of dihydroxyacetone phosphate (DHAP) to D-glyceraldehyde-3-phosphate (G3P). The sequence is that of Triosephosphate isomerase from Pediococcus pentosaceus (strain ATCC 25745 / CCUG 21536 / LMG 10740 / 183-1w).